Reading from the N-terminus, the 1711-residue chain is Nuclear pore complex protein Nup214 (1711 aa).

8 repeat units span residues 472 to 473 (FG), 486 to 487 (FG), 497 to 498 (FG), 511 to 512 (FG), 514 to 515 (FG), 535 to 536 (FG), 588 to 589 (TS), and 598 to 599 (SL). The interval 472 to 1703 (FGAAAAKAPA…NSNAQKPAFG (1232 aa)) is 45 X 2 AA repeats of F-G. Leucine-zipper stretches follow at residues 650–672 (LDDLQELNEQAKDVEFELDVQGL) and 767–788 (LTRLQNLTSNQRIVQNNIKSKL). Residues 886–905 (KPATANKYTQAAVAPPSPPD) are disordered. Copy 9 of the repeat occupies 1009–1010 (FG). Positions 1012 to 1081 (GSPAVAAPTP…NKSFGFGGFT (70 aa)) are disordered. Composition is skewed to basic and acidic residues over residues 1037–1051 (TKPKEQKAAESKEFK) and 1058–1072 (EESKVPQKPKAETEN). The interaction with emb stretch occupies residues 1044–1711 (AAESKEFKAV…FGGSSFMNYR (668 aa)). 8 repeat units span residues 1075–1076 (FG), 1077–1078 (FG), 1097–1098 (FG), 1106–1107 (FG), 1135–1136 (FG), 1218–1219 (FG), 1229–1230 (FG), and 1240–1241 (FG). Positions 1251 to 1261 (TSVTEANNKTD) are enriched in polar residues. The disordered stretch occupies residues 1251 to 1270 (TSVTEANNKTDPISTTPSAI). Repeat copies occupy residues 1356–1357 (FG), 1388–1389 (FG), 1399–1400 (FG), 1434–1435 (FG), 1449–1450 (FG), 1458–1459 (FG), 1472–1473 (FG), 1481–1482 (FG), 1487–1488 (FG), 1507–1508 (FG), 1512–1513 (FG), 1539–1540 (FG), 1547–1548 (FG), 1562–1563 (FG), 1571–1572 (FG), 1584–1585 (FG), 1588–1589 (FG), 1601–1602 (FG), 1617–1618 (FG), 1623–1624 (FG), 1629–1630 (FG), 1635–1636 (FG), 1641–1642 (FG), 1647–1648 (FG), 1650–1651 (FG), 1662–1663 (FG), and 1686–1687 (FG). 2 disordered regions span residues 1533-1552 (SPQASPFGGGGNSIFGSPAT) and 1557-1614 (SGGS…TTTP). 2 stretches are compositionally biased toward gly residues: residues 1560–1572 (SIFGGGSSSGGFG) and 1582–1595 (GGFGGGFGQGGGGS). Residues 1596–1614 (VAQTGFGSPQAPQQQTTTP) show a composition bias toward low complexity. Over residues 1688–1698 (NLAQTGNSNAQ) the composition is skewed to polar residues. The tract at residues 1688-1711 (NLAQTGNSNAQKPAFGGSSFMNYR) is disordered. Residues 1702–1703 (FG) form repeat 45.

As to quaternary structure, component of the nuclear pore complex. Interacts with mbo/Nup88 and (via C-terminus) with emb to attenuate emb-mediated protein export.

It localises to the nucleus. Its subcellular location is the nuclear pore complex. The protein resides in the nucleus membrane. Its function is as follows. Part of the nuclear pore complex. Serves as a docking site in the receptor-mediated import of substrates across the nuclear pore complex including emb, RanGAP and phosphorylated Mad. Protects mbo/Nup88 from proteasomal degradation at the nuclear pore. Together with mbo/Nup88, sequesters emb in the cytoplasm and thereby attenuates nuclear export signal (NES)-mediated nuclear export. Together with mbo/Nup88, required for the nuclear import of the Rel family transcription factors dorsal (dl) and Dorsal-related immunity factor (Dif) and the activation of an immune response. The protein is Nuclear pore complex protein Nup214 of Drosophila melanogaster (Fruit fly).